The following is a 1031-amino-acid chain: Putative protein TIC 214 N-terminal part (1031 aa).

Helical transmembrane passes span Ile-11–Leu-31, Thr-68–Leu-88, Ala-92–Ser-112, Gly-127–Pro-147, Ser-166–Leu-186, and Thr-212–Phe-232.

This sequence belongs to the TIC214 family. In terms of assembly, part of the Tic complex.

It is found in the plastid. The protein localises to the chloroplast inner membrane. In terms of biological role, involved in protein precursor import into chloroplasts. May be part of an intermediate translocation complex acting as a protein-conducting channel at the inner envelope. The chain is Putative protein TIC 214 N-terminal part from Anthoceros angustus (Hornwort).